Consider the following 350-residue polypeptide: Ion-translocating oxidoreductase complex subunit D (350 aa).

A run of 4 helical transmembrane segments spans residues 20–40 (IMLLVLLAAVPGIVVQTWFFG), 42–62 (GTVLQIVLAALTAWATEAAIL), 89–109 (IPPLAPWWMVVLGTAFAVVIA), and 123–143 (PAMIGYVVLLISFPVQMTSWL). Thr187 bears the FMN phosphoryl threonine mark. 5 helical membrane-spanning segments follow: residues 214–234 (VLAGLGWQWVNIAWLAGGLFL), 242–262 (WHIPVSFLLSLGLCATLGWLF), 267–287 (LASPQMHLFSGATMLGAFFIL), 301–321 (LIFGALAGLLVWLIRSFGGYP), and 322–342 (DGVAFAVLLANITVPLIDYYT).

This sequence belongs to the NqrB/RnfD family. As to quaternary structure, the complex is composed of six subunits: RnfA, RnfB, RnfC, RnfD, RnfE and RnfG. FMN is required as a cofactor.

The protein localises to the cell inner membrane. In terms of biological role, part of a membrane-bound complex that couples electron transfer with translocation of ions across the membrane. This chain is Ion-translocating oxidoreductase complex subunit D, found in Klebsiella pneumoniae (strain 342).